A 452-amino-acid chain; its full sequence is uncharacterized protein (452 aa).

Residues 1 to 452 (MTAVSSNRNP…LRKPEADTAL (452 aa)) are disordered. Polar residues-rich tracts occupy residues 29–41 (RTGT…VSSN), 95–111 (SPQT…SNRN), 129–144 (SPQT…SSNR), and 163–176 (SPQT…AVSS). The segment covering 177–193 (NRDHEDDGCLLKQESRG) has biased composition (basic and acidic residues). 7 stretches are compositionally biased toward polar residues: residues 197–212 (SPQT…SSNR), 231–245 (SPQT…VSSN), 265–280 (SPQT…SSNR), 299–314 (SPQT…SSNR), 333–347 (SPQT…VSSK), 376–394 (TAVS…SNRN), and 412–426 (SPQT…VSSN). Positions 439–452 (EPQELRKPEADTAL) are enriched in basic and acidic residues.

This is an uncharacterized protein from Homo sapiens (Human).